Reading from the N-terminus, the 1499-residue chain is ABC multidrug transporter A-2 (1499 aa).

Disordered regions lie at residues 1-66 (MAMQ…IDQE) and 80-107 (QISQ…NSDK). Over residues 16 to 30 (ISSSAGQEVASTIRR) the composition is skewed to polar residues. Residues 31-51 (QFTDADADRIVETPLGEKADS) are compositionally biased toward basic and acidic residues. Residues 80–94 (QISQKSAGPTNTFLD) show a composition bias toward polar residues. In terms of domain architecture, ABC transporter 1 spans 166-415 (LRSILGCRNR…FIDMGFDCPD (250 aa)). Asparagine 339 carries N-linked (GlcNAc...) asparagine glycosylation. 5 consecutive transmembrane segments (helical) span residues 526-546 (MTLA…SVFY), 561-581 (LLFF…LTLW), 606-626 (MIVD…ILYF), 635-655 (GHFF…SNIF), and 669-689 (MVPS…TIPV). A glycan (N-linked (GlcNAc...) asparagine) is linked at asparagine 763. Residues 778 to 798 (GIILGFFFFFLAAYIICSELV) form a helical membrane-spanning segment. The region spanning 857-1100 (FHWQDVCYDI…LIKYFENKGS (244 aa)) is the ABC transporter 2 domain. Position 893–900 (893–900 (GVTGAGKT)) interacts with ATP. 5 helical membrane passes run 1193-1213 (YIYS…FTFW), 1227-1247 (FAIF…MPYF), 1268-1288 (AFML…AVPA), 1317-1337 (LLIL…IAGI), and 1353-1373 (LCLI…FWIF). N-linked (GlcNAc...) asparagine glycosylation is present at asparagine 1414. The helical transmembrane segment at 1466–1486 (GLLFVYIVFNIFAAIFLYWLI) threads the bilayer.

Belongs to the ABC transporter superfamily. ABCG family. PDR (TC 3.A.1.205) subfamily.

Its subcellular location is the cell membrane. It catalyses the reaction itraconazole(in) + ATP + H2O = itraconazole(out) + ADP + phosphate + H(+). It carries out the reaction voriconazole(in) + ATP + H2O = voriconazole(out) + ADP + phosphate + H(+). Its activity is regulated as follows. The efflux inhibitor FK506 impairs the transport activity. In terms of biological role, pleiotropic ABC efflux transporter that confers resistance to structurally and functionally unrelated compounds including azoles such as itraconazole, posaconazole, and voriconazole. The protein is ABC multidrug transporter A-2 of Aspergillus fumigatus (strain ATCC MYA-4609 / CBS 101355 / FGSC A1100 / Af293) (Neosartorya fumigata).